Here is a 282-residue protein sequence, read N- to C-terminus: Elongation factor Ts (282 aa).

Positions 79–82 are involved in Mg(2+) ion dislocation from EF-Tu; the sequence is TDFV.

Belongs to the EF-Ts family.

The protein localises to the cytoplasm. Functionally, associates with the EF-Tu.GDP complex and induces the exchange of GDP to GTP. It remains bound to the aminoacyl-tRNA.EF-Tu.GTP complex up to the GTP hydrolysis stage on the ribosome. The polypeptide is Elongation factor Ts (Shewanella sediminis (strain HAW-EB3)).